A 447-amino-acid polypeptide reads, in one-letter code: T-box transcription factor TBX20 (447 aa).

A disordered region spans residues 62–81 (DAHGEFGGGSGSSPSSSSLC). Residues 109-288 (LWDKFHELGT…SNPFAKGFRD (180 aa)) constitute a DNA-binding region (T-box). Residues 316 to 340 (TYGGEEDVLGDESQTTPNRGSAFTT) form a disordered region. A compositionally biased stretch (polar residues) spans 327–340 (ESQTTPNRGSAFTT).

It is found in the nucleus. Functionally, acts as a transcriptional activator and repressor required for cardiac development and may have key roles in the maintenance of functional and structural phenotypes in adult heart. In Homo sapiens (Human), this protein is T-box transcription factor TBX20 (TBX20).